A 186-amino-acid chain; its full sequence is ATP synthase subunit delta (186 aa).

The protein belongs to the ATPase delta chain family. F-type ATPases have 2 components, F(1) - the catalytic core - and F(0) - the membrane proton channel. F(1) has five subunits: alpha(3), beta(3), gamma(1), delta(1), epsilon(1). F(0) has three main subunits: a(1), b(2) and c(10-14). The alpha and beta chains form an alternating ring which encloses part of the gamma chain. F(1) is attached to F(0) by a central stalk formed by the gamma and epsilon chains, while a peripheral stalk is formed by the delta and b chains.

The protein resides in the cell inner membrane. F(1)F(0) ATP synthase produces ATP from ADP in the presence of a proton or sodium gradient. F-type ATPases consist of two structural domains, F(1) containing the extramembraneous catalytic core and F(0) containing the membrane proton channel, linked together by a central stalk and a peripheral stalk. During catalysis, ATP synthesis in the catalytic domain of F(1) is coupled via a rotary mechanism of the central stalk subunits to proton translocation. Its function is as follows. This protein is part of the stalk that links CF(0) to CF(1). It either transmits conformational changes from CF(0) to CF(1) or is implicated in proton conduction. The protein is ATP synthase subunit delta of Nitrobacter winogradskyi (strain ATCC 25391 / DSM 10237 / CIP 104748 / NCIMB 11846 / Nb-255).